The sequence spans 247 residues: Cobalt transport protein CbiM (247 aa).

The N-terminal stretch at 1-21 is a signal peptide; sequence MVGWGVLILLMVLWLPRQAYA. The next 7 membrane-spanning stretches (helical) occupy residues 27–47, 64–84, 96–116, 119–139, 159–179, 181–201, and 202–222; these read GYLP…ALIL, LVLA…LPSV, LGAV…ILLF, LLLA…MAVV, GVAV…TTSL, LALA…KFAS, and IFAV…VIMV.

This sequence belongs to the CbiM family. In terms of assembly, forms an energy-coupling factor (ECF) transporter complex composed of an ATP-binding protein (A component, CbiO), a transmembrane protein (T component, CbiQ) and 2 possible substrate-capture proteins (S components, CbiM and CbiN) of unknown stoichimetry.

It localises to the cell membrane. It participates in cofactor biosynthesis; adenosylcobalamin biosynthesis. In terms of biological role, part of the energy-coupling factor (ECF) transporter complex CbiMNOQ involved in cobalt import. The chain is Cobalt transport protein CbiM from Kyrpidia tusciae (strain DSM 2912 / NBRC 15312 / T2) (Bacillus tusciae).